A 382-amino-acid chain; its full sequence is Homeobox protein SHOOT MERISTEMLESS (382 aa).

Residues 26-59 (MMMMMPPIMTSHQHHGHDHQHQQQEHDGYAYQSH) are disordered. Basic and acidic residues predominate over residues 44–53 (HQHQQQEHDG). The region spanning 262-282 (ELKGQLLRKYSGYLGSLKQEF) is the ELK domain. Positions 283 to 346 (MKKRKKGKLP…NQRKRHWKPS (64 aa)) form a DNA-binding region, homeobox; TALE-type.

The protein belongs to the TALE/KNOX homeobox family. In terms of assembly, forms homodimers. May form heterodimeric complexes with TALE/BELL proteins BEL1, BLH2, BLH3, BLH8/PNF, BLH9/PNY and ATH1. Interacts with CCT8. Binds to MBP2C; this interaction reduces RNA binding capacity. Interacts with FTIP3 and FTIP4. As to expression, expressed in all four types of shoot apical meristems (SAM) i.e. in vegetative, axillary, inflorescence and floral.

Its subcellular location is the nucleus. It is found in the cell junction. The protein resides in the plasmodesma. It localises to the cytoplasm. The protein localises to the endosome. Its subcellular location is the cell membrane. In terms of biological role, required for shoot apical meristem (SAM) formation during embryogenesis. Negatively regulates ASYMMETRIC LEAVES1 (AS1) and ASYMMETRIC LEAVES2 (AS2 or LBD6). Probably binds to the DNA sequence 5'-TGAC-3'. Binds to RNA. The sequence is that of Homeobox protein SHOOT MERISTEMLESS from Arabidopsis thaliana (Mouse-ear cress).